The primary structure comprises 56 residues: Light-harvesting protein B-880 beta chain (56 aa).

Topologically, residues 1–22 (AEIDRPVSLSGLTEGEAREFHG) are cytoplasmic. A bacteriochlorophyll is bound by residues His21 and His39. Residues 23-45 (VFMTSFMVFIAVAIVAHILAWMW) traverse the membrane as a helical segment. The Periplasmic portion of the chain corresponds to 46–56 (RPWIPGPEGYA).

It belongs to the antenna complex beta subunit family. The core complex is formed by different alpha and beta chains, binding bacteriochlorophyll molecules, and arranged most probably in tetrameric structures disposed around the reaction center. The non-pigmented gamma chains may constitute additional components.

Its subcellular location is the cell inner membrane. Its function is as follows. Antenna complexes are light-harvesting systems, which transfer the excitation energy to the reaction centers. The sequence is that of Light-harvesting protein B-880 beta chain from Afifella marina (Rhodobium marinum).